Consider the following 82-residue polypeptide: UPF0153 protein VC_1057 (82 aa).

Belongs to the UPF0153 family.

The chain is UPF0153 protein VC_1057 from Vibrio cholerae serotype O1 (strain ATCC 39315 / El Tor Inaba N16961).